The chain runs to 500 residues: Protein FAM83F (500 aa).

Alanine 2 carries the post-translational modification N-acetylalanine. A DUF1669 region spans residues 2 to 300 (AESQLNCLDE…LYAISEEVDL (299 aa)). Residue serine 4 is modified to Phosphoserine. Disordered regions lie at residues 82-109 (NARGKSKAKAKAPAPAPAESGESLAYWP), 347-366 (QQREAGGNPEGQEEGASGGE), and 391-500 (IPLG…CVIS). Residues 397-419 (SQKDGRMVSHMHRDLKPKSREAP) show a composition bias toward basic and acidic residues. 2 stretches are compositionally biased toward low complexity: residues 425-442 (GEAARGEAAPARRFSSRL) and 458-468 (SSVSTETSEVE). Polar residues predominate over residues 477–500 (ENSSADISGKTSPSSAKPSNCVIS). At serine 479 the chain carries Phosphoserine.

The protein belongs to the FAM83 family. In terms of assembly, directly interacts (via DUF1669) with CSNK1A1 and CSNK1A1L.

The protein localises to the cell membrane. This chain is Protein FAM83F (FAM83F), found in Homo sapiens (Human).